A 232-amino-acid polypeptide reads, in one-letter code: Ribonuclease P protein component 3 (232 aa).

The protein belongs to the eukaryotic/archaeal RNase P protein component 3 family. In terms of assembly, consists of a catalytic RNA component and at least 4-5 protein subunits. Forms a subcomplex with Rnp2 which stimulates the catalytic RNA.

Its subcellular location is the cytoplasm. The catalysed reaction is Endonucleolytic cleavage of RNA, removing 5'-extranucleotides from tRNA precursor.. Part of ribonuclease P, a protein complex that generates mature tRNA molecules by cleaving their 5'-ends. This Methanocaldococcus jannaschii (strain ATCC 43067 / DSM 2661 / JAL-1 / JCM 10045 / NBRC 100440) (Methanococcus jannaschii) protein is Ribonuclease P protein component 3.